Here is a 190-residue protein sequence, read N- to C-terminus: Small ribosomal subunit protein mS23 (190 aa).

N-acetylalanine is present on alanine 2. Lysine 83 carries the post-translational modification N6-succinyllysine. The residue at position 102 (lysine 102) is an N6-acetyllysine. Residues 137-190 (KARTQQEGSQVSRKSESMGVESQTALEENPPLKEVPQAQHLESPGEESKGLSPP) form a disordered region.

This sequence belongs to the mitochondrion-specific ribosomal protein mS23 family. In terms of assembly, component of the mitochondrial ribosome small subunit (28S) which comprises a 12S rRNA and about 30 distinct proteins.

The protein localises to the mitochondrion. The polypeptide is Small ribosomal subunit protein mS23 (Bos taurus (Bovine)).